The primary structure comprises 340 residues: Phosphoribosylformylglycinamidine cyclo-ligase (340 aa).

Belongs to the AIR synthase family.

Its subcellular location is the cytoplasm. The catalysed reaction is 2-formamido-N(1)-(5-O-phospho-beta-D-ribosyl)acetamidine + ATP = 5-amino-1-(5-phospho-beta-D-ribosyl)imidazole + ADP + phosphate + H(+). Its pathway is purine metabolism; IMP biosynthesis via de novo pathway; 5-amino-1-(5-phospho-D-ribosyl)imidazole from N(2)-formyl-N(1)-(5-phospho-D-ribosyl)glycinamide: step 2/2. The polypeptide is Phosphoribosylformylglycinamidine cyclo-ligase (Streptococcus agalactiae serotype V (strain ATCC BAA-611 / 2603 V/R)).